The following is a 156-amino-acid chain: uncharacterized protein (156 aa).

Transmembrane regions (helical) follow at residues 7–29 (AQIS…SYFL), 42–64 (YFAL…PYLF), 69–88 (AVTG…AITS), 98–120 (AAIW…YPAL), and 133–155 (ALVL…ISRI).

It is found in the cell membrane. This is an uncharacterized protein from Pasteurella multocida (strain Pm70).